Consider the following 152-residue polypeptide: Putative pre-16S rRNA nuclease (152 aa).

It belongs to the YqgF nuclease family.

It is found in the cytoplasm. Functionally, could be a nuclease involved in processing of the 5'-end of pre-16S rRNA. The polypeptide is Putative pre-16S rRNA nuclease (Nitrosococcus oceani (strain ATCC 19707 / BCRC 17464 / JCM 30415 / NCIMB 11848 / C-107)).